Here is a 416-residue protein sequence, read N- to C-terminus: 3-isopropylmalate dehydratase large subunit (416 aa).

Residues Cys-299, Cys-357, and Cys-360 each coordinate [4Fe-4S] cluster.

The protein belongs to the aconitase/IPM isomerase family. LeuC type 2 subfamily. As to quaternary structure, heterodimer of LeuC and LeuD. [4Fe-4S] cluster is required as a cofactor.

It catalyses the reaction (2R,3S)-3-isopropylmalate = (2S)-2-isopropylmalate. It participates in amino-acid biosynthesis; L-leucine biosynthesis; L-leucine from 3-methyl-2-oxobutanoate: step 2/4. In terms of biological role, catalyzes the isomerization between 2-isopropylmalate and 3-isopropylmalate, via the formation of 2-isopropylmaleate. This Saccharolobus solfataricus (strain ATCC 35092 / DSM 1617 / JCM 11322 / P2) (Sulfolobus solfataricus) protein is 3-isopropylmalate dehydratase large subunit.